A 467-amino-acid chain; its full sequence is ATP-dependent protease ATPase subunit HslU (467 aa).

ATP contacts are provided by residues Val-22 and 64 to 69 (GVGKTE). Residues 149–192 (QTNNPLESLFGGAIPNFGQNNEDEEEPPTEEIKTKRSEIKRQLE) form a disordered region. Over residues 178 to 192 (EEIKTKRSEIKRQLE) the composition is skewed to basic and acidic residues. Positions 280, 345, and 417 each coordinate ATP.

It belongs to the ClpX chaperone family. HslU subfamily. A double ring-shaped homohexamer of HslV is capped on each side by a ring-shaped HslU homohexamer. The assembly of the HslU/HslV complex is dependent on binding of ATP.

It localises to the cytoplasm. In terms of biological role, ATPase subunit of a proteasome-like degradation complex; this subunit has chaperone activity. The binding of ATP and its subsequent hydrolysis by HslU are essential for unfolding of protein substrates subsequently hydrolyzed by HslV. HslU recognizes the N-terminal part of its protein substrates and unfolds these before they are guided to HslV for hydrolysis. In Staphylococcus aureus (strain MRSA252), this protein is ATP-dependent protease ATPase subunit HslU.